A 231-amino-acid chain; its full sequence is Small ribosomal subunit protein uS2 (231 aa).

The protein belongs to the universal ribosomal protein uS2 family.

The polypeptide is Small ribosomal subunit protein uS2 (Blochmanniella floridana).